The following is a 212-amino-acid chain: MTIGLVGRKVGMTRVFTEDGVSTPVTVIEVEANRVAQVKTVDNDGYSALQVTTGKRKASRVTKPAAGHFAKAGIEAGRGLWEFRLNENEGSDIEAGSEITVEVFNDTKLVDVTGTSKGKGFQGGIKRWNFTMQHATHGVSLSHRSNGSLGQCQTPGRVFKGKKMSGHMGAVRCTTQNLELVRVDAERNLLLIKGAVPGAINGNVIIKPAVKA.

The residue at position 153 (Q153) is an N5-methylglutamine.

It belongs to the universal ribosomal protein uL3 family. As to quaternary structure, part of the 50S ribosomal subunit. Forms a cluster with proteins L14 and L19. Post-translationally, methylated by PrmB.

One of the primary rRNA binding proteins, it binds directly near the 3'-end of the 23S rRNA, where it nucleates assembly of the 50S subunit. This chain is Large ribosomal subunit protein uL3, found in Colwellia psychrerythraea (strain 34H / ATCC BAA-681) (Vibrio psychroerythus).